Here is a 459-residue protein sequence, read N- to C-terminus: Putrescine aminotransferase (459 aa).

Pyridoxal 5'-phosphate is bound by residues 150 to 151 (GT) and glutamine 274. The residue at position 300 (lysine 300) is an N6-(pyridoxal phosphate)lysine. Threonine 332 lines the pyridoxal 5'-phosphate pocket.

This sequence belongs to the class-III pyridoxal-phosphate-dependent aminotransferase family. Putrescine aminotransferase subfamily. Requires pyridoxal 5'-phosphate as cofactor.

The enzyme catalyses an alkane-alpha,omega-diamine + 2-oxoglutarate = an omega-aminoaldehyde + L-glutamate. It carries out the reaction putrescine + 2-oxoglutarate = 1-pyrroline + L-glutamate + H2O. It catalyses the reaction cadaverine + 2-oxoglutarate = 5-aminopentanal + L-glutamate. It functions in the pathway amine and polyamine degradation; putrescine degradation; 4-aminobutanal from putrescine (transaminase route): step 1/1. Its function is as follows. Catalyzes the aminotransferase reaction from putrescine to 2-oxoglutarate, leading to glutamate and 4-aminobutanal, which spontaneously cyclizes to form 1-pyrroline. This is the first step in one of two pathways for putrescine degradation, where putrescine is converted into 4-aminobutanoate (gamma-aminobutyrate or GABA) via 4-aminobutanal. Also functions as a cadaverine transaminase in a a L-lysine degradation pathway to succinate that proceeds via cadaverine, glutarate and L-2-hydroxyglutarate. This is Putrescine aminotransferase from Escherichia coli O9:H4 (strain HS).